A 423-amino-acid chain; its full sequence is Histidine--tRNA ligase (423 aa).

It belongs to the class-II aminoacyl-tRNA synthetase family. Homodimer.

The protein resides in the cytoplasm. It catalyses the reaction tRNA(His) + L-histidine + ATP = L-histidyl-tRNA(His) + AMP + diphosphate + H(+). This is Histidine--tRNA ligase from Corynebacterium diphtheriae (strain ATCC 700971 / NCTC 13129 / Biotype gravis).